A 574-amino-acid polypeptide reads, in one-letter code: Septation ring formation regulator EzrA (574 aa).

Over 1 to 7 (MSSGIIL) the chain is Extracellular. Residues 8 to 26 (LIVAIVLLVIIAYLVGVII) form a helical membrane-spanning segment. The Cytoplasmic segment spans residues 27-574 (RKRNDSLITS…YEKTREHIRF (548 aa)). Coiled coils occupy residues 102–141 (NFIR…EEKN), 274–350 (ELVT…ETES), and 459–520 (QLEA…SFEA).

Belongs to the EzrA family.

The protein resides in the cell membrane. Negative regulator of FtsZ ring formation; modulates the frequency and position of FtsZ ring formation. Inhibits FtsZ ring formation at polar sites. Interacts either with FtsZ or with one of its binding partners to promote depolymerization. The chain is Septation ring formation regulator EzrA from Streptococcus pyogenes serotype M3 (strain SSI-1).